The following is an 898-amino-acid chain: Serine/threonine-protein kinase TAO3 (898 aa).

Residues 24-277 form the Protein kinase domain; it reads FIDLHEIGHG…AVELLRHDFI (254 aa). ATP contacts are provided by residues 30-38 and Lys53; that span reads IGHGSFGAV. Asp147 acts as the Proton acceptor in catalysis. 2 disordered regions span residues 316–375 and 405–424; these read TRNG…DESS and DEAGHGDPRPEPRPTQSVQS. Ser324 bears the Phosphoserine; by ATM mark. Phosphoserine is present on residues Ser343, Ser346, and Ser349. Residues 349–366 are compositionally biased toward low complexity; that stretch reads SIPSTSVSTGSRSSSVNS. Thr357 carries the post-translational modification Phosphothreonine. At Ser359 the chain carries Phosphoserine. Residues 405–416 are compositionally biased toward basic and acidic residues; it reads DEAGHGDPRPEP. Ser442 carries the phosphoserine modification. 3 coiled-coil regions span residues 452 to 502, 548 to 649, and 754 to 871; these read EQEN…THAN, FLES…HAML, and LKTL…QERE. The interval 565-596 is disordered; that stretch reads EEMNEDHSTPKKEKQERISKHKENLQHTQAEE. An N6-acetyllysine modification is found at Lys830.

The protein belongs to the protein kinase superfamily. STE Ser/Thr protein kinase family. STE20 subfamily. As to quaternary structure, self-associates. Interacts with ERN1 and TRAF2. Interaction with TRAF2 is facilitated under ER stress conditions, such as treatment with tunicamycin, and may promote TRAF2 phosphorylation. Interacts (via N-terminus) with STK25; the interaction promotes STK25 abundance at the level of protein expression and/or stability. Post-translationally, autophosphorylated. Phosphorylation at Ser-324 by ATM following DNA damage is required for activation of the p38/MAPK14 stress-activated MAPK cascade. Phosphorylated at Ser-324 and on Tyr residues during T cell activation. Phosphorylated by LRRK2.

Its subcellular location is the cytoplasm. The protein resides in the cell membrane. It localises to the membrane raft. The protein localises to the lipid droplet. The enzyme catalyses L-seryl-[protein] + ATP = O-phospho-L-seryl-[protein] + ADP + H(+). The catalysed reaction is L-threonyl-[protein] + ATP = O-phospho-L-threonyl-[protein] + ADP + H(+). Its function is as follows. Serine/threonine-protein kinase that acts as a regulator of the p38/MAPK14 stress-activated MAPK cascade and of the MAPK8/JNK cascade. In response to DNA damage, involved in the G2/M transition DNA damage checkpoint by activating the p38/MAPK14 stress-activated MAPK cascade, probably by mediating phosphorylation of upstream MAP2K3 and MAP2K6 kinases. Inhibits basal activity of the MAPK8/JNK cascade and diminishes its activation in response to epidermal growth factor (EGF). Positively regulates canonical T cell receptor (TCR) signaling by preventing early PTPN6/SHP1-mediated inactivation of LCK, ensuring sustained TCR signaling that is required for optimal activation and differentiation of T cells. Phosphorylates PTPN6/SHP1 on 'Thr-394', leading to its polyubiquitination and subsequent proteasomal degradation. Required for cell surface expression of metalloprotease ADAM10 on type 1 transitional B cells which is necessary for their NOTCH-mediated development into marginal zone B cells. Also required for the NOTCH-mediated terminal differentiation of splenic conventional type 2 dendritic cells. Positively regulates osteoblast differentiation by acting as an upstream activator of the JNK pathway. Promotes JNK signaling in hepatocytes and positively regulates hepatocyte lipid storage by inhibiting beta-oxidation and triacylglycerol secretion while enhancing lipid synthesis. Restricts age-associated inflammation by negatively regulating differentiation of macrophages and their production of pro-inflammatory cytokines. Plays a role in negatively regulating the abundance of regulatory T cells in white adipose tissue. This Mus musculus (Mouse) protein is Serine/threonine-protein kinase TAO3 (Taok3).